Here is a 492-residue protein sequence, read N- to C-terminus: Cytochrome P450 monooxygenase ATEG_03631 (492 aa).

The helical transmembrane segment at 10 to 30 threads the bilayer; that stretch reads FATLNPMVVVAIPVFLFVISL. An N-linked (GlcNAc...) asparagine glycan is attached at Asn-309. Cys-457 contributes to the heme binding site.

It belongs to the cytochrome P450 family. Requires heme as cofactor.

The protein localises to the membrane. The protein operates within secondary metabolite biosynthesis. Functionally, cytochrome P450 monooxygenase; part of the cluster A that mediates the biosynthesis of azasperpyranones, members of the azaphilone family that exhibit anti-cancer activities. Azasperpyranones are synthesized by 2 clusters, A and B. Cluster A is responsible for the production of the polyhydric phenol moiety while the azaphilonoid scaffold is produced by the cluster B. The non-reducing polyketide synthase ATEG_03629 produces 5-methyl orsellinic acid, which is then reduced to 5-methyl orsellinic aldehyde by the NRPS-like protein ATEG_03630. 5-methyl orsellinic aldehyde is then first hydroxylated by the FAD-dependent monooxygenase ATEG_03635 and subsequently hydroxylated by the cytochrome P450 monooxygenase ATEG_03631 to produce the unstable polyhydric phenol precursor of azasperpyranones. On the other hand, the polyketide synthase ATEG_07659 is responsible for producing the 3,5-dimethyloctadienone moiety from acetyl-CoA, three malonyl-CoA, and two S-adenosyl methionines (SAM). The 3,5-dimethyloctadienone moiety is then loaded onto the SAT domain of ATEG_07661 and extended with four malonyl-CoA and one SAM, which leads to the formation of 2,4-dihydroxy-6-(5,7-dimethyl-2-oxo-trans-3-trans-5-nonadienyl)-3-methylbenzaldehyde (compound 8) after reductive release and aldol condensation. The FAD-dependent monooxygenase ATEG_07662 is the next enzyme in the biosynthesis sequence and hydroxylates the side chain at the benzylic position of compound 8. In Aspergillus nidulans, afoF, the ortholog of the FAD-dependent oxygenase ATEG_07660, is the key enzyme for the biosynthesis of asperfuranone by catalyzing the hydroxylation at C-8 of to prevent the formation of a six-membered ring hemiacetal intermediate and thus facilitating the formation of a five-membered ring to produce asperfuranone. In Aspergillus terreus, ATEG_07660 is probably not functional, which leads to the formation of the six-membered ring hemiacetal intermediate presperpyranone instead of asperfuranone. Finally, ATEG_03636 is involved in the condensation of the polyhydric phenol moiety produced by cluster A and the perasperpyranone precursor produced by cluster B, to yield azasperpyranone A. Further modifications of azasperpyranone A result in the production of derivatives, including azasperpyranone B to F. The protein is Cytochrome P450 monooxygenase ATEG_03631 of Aspergillus terreus (strain NIH 2624 / FGSC A1156).